Here is a 534-residue protein sequence, read N- to C-terminus: NEDD8-activating enzyme E1 regulatory subunit (534 aa).

N-acetylalanine is present on alanine 2. N6-acetyllysine is present on residues lysine 6 and lysine 341. Positions 331–344 are interaction with UBA3; that stretch reads DMIADSGKYIKLQN.

Belongs to the ubiquitin-activating E1 family. ULA1 subfamily. In terms of assembly, heterodimer of UBA3 and NAE1. The complex binds NEDD8 and UBE2M. Binds APP and TP53BP2. In terms of processing, ubiquitinated by TRIP12, leading to its degradation by the proteasome. In terms of tissue distribution, ubiquitous in fetal tissues. Expressed throughout the adult brain.

The protein resides in the cell membrane. It participates in protein modification; protein neddylation. Binding of TP53BP2 to the regulatory subunit NAE1 decreases neddylation activity. In terms of biological role, regulatory subunit of the dimeric UBA3-NAE1 E1 enzyme. E1 activates NEDD8 by first adenylating its C-terminal glycine residue with ATP, thereafter linking this residue to the side chain of the catalytic cysteine, yielding a NEDD8-UBA3 thioester and free AMP. E1 finally transfers NEDD8 to the catalytic cysteine of UBE2M. Necessary for cell cycle progression through the S-M checkpoint. Overexpression of NAE1 causes apoptosis through deregulation of NEDD8 conjugation. The covalent attachment of NEDD8 to target proteins is known as 'neddylation' and the process is involved in the regulation of cell growth, viability and development. The protein is NEDD8-activating enzyme E1 regulatory subunit (NAE1) of Homo sapiens (Human).